Reading from the N-terminus, the 632-residue chain is Arginine--tRNA ligase (632 aa).

The short motif at 120 to 130 (ANPIHPLHIGH) is the 'HIGH' region element.

The protein belongs to the class-I aminoacyl-tRNA synthetase family.

It localises to the cytoplasm. The enzyme catalyses tRNA(Arg) + L-arginine + ATP = L-arginyl-tRNA(Arg) + AMP + diphosphate. The polypeptide is Arginine--tRNA ligase (Pyrobaculum islandicum (strain DSM 4184 / JCM 9189 / GEO3)).